The sequence spans 153 residues: Ribosome maturation factor RimP (153 aa).

This sequence belongs to the RimP family.

It localises to the cytoplasm. Required for maturation of 30S ribosomal subunits. The sequence is that of Ribosome maturation factor RimP from Actinobacillus pleuropneumoniae serotype 5b (strain L20).